A 554-amino-acid chain; its full sequence is Carboxypeptidase Y homolog A (554 aa).

Residues 1-17 (MRISASTVLLGAASAAS) form the signal peptide. The propeptide occupies 18–137 (AASFQNQAQQ…QLDNFNLRVK (120 aa)). Disulfide bonds link cysteine 191–cysteine 431, cysteine 325–cysteine 339, cysteine 349–cysteine 372, cysteine 356–cysteine 365, and cysteine 394–cysteine 401. Asparagine 222 is a glycosylation site (N-linked (GlcNAc...) asparagine). Residue serine 278 is part of the active site. The active site involves aspartate 470. The N-linked (GlcNAc...) asparagine glycan is linked to asparagine 518. The active site involves histidine 529.

This sequence belongs to the peptidase S10 family.

The protein resides in the vacuole. It catalyses the reaction Release of a C-terminal amino acid with broad specificity.. Functionally, vacuolar carboxypeptidase involved in degradation of small peptides. Digests preferentially peptides containing an aliphatic or hydrophobic residue in P1' position, as well as methionine, leucine or phenylalanine in P1 position of ester substrate. This Sordaria macrospora (strain ATCC MYA-333 / DSM 997 / K(L3346) / K-hell) protein is Carboxypeptidase Y homolog A (CPYA).